We begin with the raw amino-acid sequence, 405 residues long: Argininosuccinate synthase (405 aa).

Residues 11-19 (AYSGGLDTS) and Ala38 contribute to the ATP site. L-citrulline is bound by residues Tyr91 and Ser96. Residue Gly121 participates in ATP binding. Residues Thr123, Asn127, and Asp128 each contribute to the L-aspartate site. Residue Asn127 participates in L-citrulline binding. Arg131, Ser181, Ser190, Glu266, and Tyr278 together coordinate L-citrulline.

It belongs to the argininosuccinate synthase family. Type 1 subfamily. As to quaternary structure, homotetramer.

The protein resides in the cytoplasm. The enzyme catalyses L-citrulline + L-aspartate + ATP = 2-(N(omega)-L-arginino)succinate + AMP + diphosphate + H(+). The protein operates within amino-acid biosynthesis; L-arginine biosynthesis; L-arginine from L-ornithine and carbamoyl phosphate: step 2/3. This is Argininosuccinate synthase from Nitratiruptor sp. (strain SB155-2).